The chain runs to 1199 residues: DNA-directed RNA polymerase subunit beta (1199 aa).

Positions 1177–1199 (EQEEKKAKEAEQETAEKEETKTE) are disordered.

It belongs to the RNA polymerase beta chain family. As to quaternary structure, the RNAP catalytic core consists of 2 alpha, 1 beta, 1 beta' and 1 omega subunit. When a sigma factor is associated with the core the holoenzyme is formed, which can initiate transcription.

It carries out the reaction RNA(n) + a ribonucleoside 5'-triphosphate = RNA(n+1) + diphosphate. Its function is as follows. DNA-dependent RNA polymerase catalyzes the transcription of DNA into RNA using the four ribonucleoside triphosphates as substrates. In Ligilactobacillus salivarius (strain UCC118) (Lactobacillus salivarius), this protein is DNA-directed RNA polymerase subunit beta.